Consider the following 214-residue polypeptide: Cytochrome c biogenesis ATP-binding export protein CcmA (214 aa).

In terms of domain architecture, ABC transporter spans 12–214 (LAAHALAFSR…TRMLTLEAAA (203 aa)). 44-51 (GDNGAGKT) is a binding site for ATP.

Belongs to the ABC transporter superfamily. CcmA exporter (TC 3.A.1.107) family. The complex is composed of two ATP-binding proteins (CcmA) and two transmembrane proteins (CcmB).

Its subcellular location is the cell inner membrane. It carries out the reaction heme b(in) + ATP + H2O = heme b(out) + ADP + phosphate + H(+). Part of the ABC transporter complex CcmAB involved in the biogenesis of c-type cytochromes; once thought to export heme, this seems not to be the case, but its exact role is uncertain. Responsible for energy coupling to the transport system. The protein is Cytochrome c biogenesis ATP-binding export protein CcmA of Xanthomonas oryzae pv. oryzae (strain MAFF 311018).